The chain runs to 467 residues: 5'-nucleotidase domain-containing protein 1 (467 aa).

Aspartate 16 functions as the Nucleophile in the catalytic mechanism. Mg(2+) is bound by residues aspartate 16 and aspartate 18. The active-site Proton donor is aspartate 18. Lysine 181 is modified (N6-acetyllysine). Mg(2+) is bound at residue aspartate 323.

The protein belongs to the 5'(3')-deoxyribonucleotidase family.

The polypeptide is 5'-nucleotidase domain-containing protein 1 (Nt5dc1) (Mus musculus (Mouse)).